The chain runs to 317 residues: L-lactate dehydrogenase (317 aa).

NAD(+)-binding positions include Val-17, Asp-38, Lys-43, Tyr-69, and 83–84; that span reads GA. Gln-86 and Arg-92 together coordinate substrate. NAD(+) contacts are provided by residues Ser-105, 122-124, and Ser-147; that span reads ATN. Residue 124–127 participates in substrate binding; the sequence is NPVD. 152-155 provides a ligand contact to substrate; that stretch reads DTAR. Beta-D-fructose 1,6-bisphosphate contacts are provided by Arg-157 and His-172. Residue His-179 is the Proton acceptor of the active site. The residue at position 224 (Tyr-224) is a Phosphotyrosine. A substrate-binding site is contributed by Thr-233.

The protein belongs to the LDH/MDH superfamily. LDH family. Homotetramer.

The protein resides in the cytoplasm. It catalyses the reaction (S)-lactate + NAD(+) = pyruvate + NADH + H(+). Its pathway is fermentation; pyruvate fermentation to lactate; (S)-lactate from pyruvate: step 1/1. With respect to regulation, allosterically activated by fructose 1,6-bisphosphate (FBP). In terms of biological role, catalyzes the conversion of lactate to pyruvate. This is L-lactate dehydrogenase from Geobacillus thermodenitrificans (strain NG80-2).